Here is a 212-residue protein sequence, read N- to C-terminus: Phosphatidylserine decarboxylase proenzyme (212 aa).

Residue Ser-182 is the Schiff-base intermediate with substrate; via pyruvic acid of the active site. Position 182 is a pyruvic acid (Ser); by autocatalysis (Ser-182).

The protein belongs to the phosphatidylserine decarboxylase family. PSD-A subfamily. In terms of assembly, heterodimer of a large membrane-associated beta subunit and a small pyruvoyl-containing alpha subunit. The cofactor is pyruvate. In terms of processing, is synthesized initially as an inactive proenzyme. Formation of the active enzyme involves a self-maturation process in which the active site pyruvoyl group is generated from an internal serine residue via an autocatalytic post-translational modification. Two non-identical subunits are generated from the proenzyme in this reaction, and the pyruvate is formed at the N-terminus of the alpha chain, which is derived from the carboxyl end of the proenzyme. The post-translation cleavage follows an unusual pathway, termed non-hydrolytic serinolysis, in which the side chain hydroxyl group of the serine supplies its oxygen atom to form the C-terminus of the beta chain, while the remainder of the serine residue undergoes an oxidative deamination to produce ammonia and the pyruvoyl prosthetic group on the alpha chain.

The protein localises to the cell membrane. The enzyme catalyses a 1,2-diacyl-sn-glycero-3-phospho-L-serine + H(+) = a 1,2-diacyl-sn-glycero-3-phosphoethanolamine + CO2. It participates in phospholipid metabolism; phosphatidylethanolamine biosynthesis; phosphatidylethanolamine from CDP-diacylglycerol: step 2/2. Functionally, catalyzes the formation of phosphatidylethanolamine (PtdEtn) from phosphatidylserine (PtdSer). This Paraburkholderia phytofirmans (strain DSM 17436 / LMG 22146 / PsJN) (Burkholderia phytofirmans) protein is Phosphatidylserine decarboxylase proenzyme.